Reading from the N-terminus, the 338-residue chain is Aspartate carbamoyltransferase catalytic subunit (338 aa).

R71 and T72 together coordinate carbamoyl phosphate. K99 is an L-aspartate binding site. Residues R121, H151, and Q154 each contribute to the carbamoyl phosphate site. Residues R184 and R239 each coordinate L-aspartate. Residues G280 and P281 each contribute to the carbamoyl phosphate site.

This sequence belongs to the aspartate/ornithine carbamoyltransferase superfamily. ATCase family. Heterododecamer (2C3:3R2) of six catalytic PyrB chains organized as two trimers (C3), and six regulatory PyrI chains organized as three dimers (R2).

It catalyses the reaction carbamoyl phosphate + L-aspartate = N-carbamoyl-L-aspartate + phosphate + H(+). It participates in pyrimidine metabolism; UMP biosynthesis via de novo pathway; (S)-dihydroorotate from bicarbonate: step 2/3. Catalyzes the condensation of carbamoyl phosphate and aspartate to form carbamoyl aspartate and inorganic phosphate, the committed step in the de novo pyrimidine nucleotide biosynthesis pathway. This chain is Aspartate carbamoyltransferase catalytic subunit, found in Stutzerimonas stutzeri (strain A1501) (Pseudomonas stutzeri).